We begin with the raw amino-acid sequence, 575 residues long: Methionine--tRNA ligase, mitochondrial (575 aa).

The short motif at 20–32 (PIFYPNAKPHLGH) is the 'HIGH' region element. The 'KMSKS' region signature appears at 341-345 (KMSKS). Residue lysine 344 participates in ATP binding.

This sequence belongs to the class-I aminoacyl-tRNA synthetase family.

It is found in the mitochondrion matrix. The enzyme catalyses tRNA(Met) + L-methionine + ATP = L-methionyl-tRNA(Met) + AMP + diphosphate. Its function is as follows. Catalyzes the attachment of methionine to tRNA(Met) in the mitochondrion. The polypeptide is Methionine--tRNA ligase, mitochondrial (MSM1) (Saccharomyces cerevisiae (strain ATCC 204508 / S288c) (Baker's yeast)).